A 253-amino-acid polypeptide reads, in one-letter code: Hydroxyacylglutathione hydrolase (253 aa).

Zn(2+) is bound by residues His59, His61, Asp63, His64, His118, Asp143, and His181.

This sequence belongs to the metallo-beta-lactamase superfamily. Glyoxalase II family. As to quaternary structure, monomer. Requires Zn(2+) as cofactor.

It catalyses the reaction an S-(2-hydroxyacyl)glutathione + H2O = a 2-hydroxy carboxylate + glutathione + H(+). It functions in the pathway secondary metabolite metabolism; methylglyoxal degradation; (R)-lactate from methylglyoxal: step 2/2. Its function is as follows. Thiolesterase that catalyzes the hydrolysis of S-D-lactoyl-glutathione to form glutathione and D-lactic acid. The protein is Hydroxyacylglutathione hydrolase of Prochlorococcus marinus (strain MIT 9211).